The chain runs to 196 residues: SPRY domain-containing protein 7 (196 aa).

Ala-2 is subject to N-acetylalanine. The region spanning 2-184 (AASVFCCLRC…FSEFYHTPPP (183 aa)) is the B30.2/SPRY domain.

This Bos taurus (Bovine) protein is SPRY domain-containing protein 7 (SPRYD7).